Here is a 293-residue protein sequence, read N- to C-terminus: 33 kDa chaperonin (293 aa).

Intrachain disulfides connect Cys-231-Cys-233 and Cys-264-Cys-267.

It belongs to the HSP33 family. Under oxidizing conditions two disulfide bonds are formed involving the reactive cysteines. Under reducing conditions zinc is bound to the reactive cysteines and the protein is inactive.

The protein localises to the cytoplasm. In terms of biological role, redox regulated molecular chaperone. Protects both thermally unfolding and oxidatively damaged proteins from irreversible aggregation. Plays an important role in the bacterial defense system toward oxidative stress. This chain is 33 kDa chaperonin, found in Yersinia pseudotuberculosis serotype O:1b (strain IP 31758).